A 282-amino-acid polypeptide reads, in one-letter code: tRNA (guanine-N(1)-)-methyltransferase (282 aa).

A disordered region spans residues 77-114; it reads TGPAATVSDLESSAEHKRNLRPATTNGDAEPLGEKAGG. S-adenosyl-L-methionine contacts are provided by residues Gly149 and 173–178; that span reads IGDYVL.

This sequence belongs to the RNA methyltransferase TrmD family. Homodimer.

Its subcellular location is the cytoplasm. It carries out the reaction guanosine(37) in tRNA + S-adenosyl-L-methionine = N(1)-methylguanosine(37) in tRNA + S-adenosyl-L-homocysteine + H(+). Functionally, specifically methylates guanosine-37 in various tRNAs. The sequence is that of tRNA (guanine-N(1)-)-methyltransferase from Corynebacterium jeikeium (strain K411).